Reading from the N-terminus, the 276-residue chain is 3-methyl-2-oxobutanoate hydroxymethyltransferase (276 aa).

Mg(2+) is bound by residues Asp-45 and Asp-84. Residues 45–46, Asp-84, and Lys-114 contribute to the 3-methyl-2-oxobutanoate site; that span reads DS. Residue Glu-116 participates in Mg(2+) binding. Residue Glu-183 is the Proton acceptor of the active site.

Belongs to the PanB family. As to quaternary structure, homodecamer; pentamer of dimers. It depends on Mg(2+) as a cofactor.

Its subcellular location is the cytoplasm. It carries out the reaction 3-methyl-2-oxobutanoate + (6R)-5,10-methylene-5,6,7,8-tetrahydrofolate + H2O = 2-dehydropantoate + (6S)-5,6,7,8-tetrahydrofolate. Its pathway is cofactor biosynthesis; (R)-pantothenate biosynthesis; (R)-pantoate from 3-methyl-2-oxobutanoate: step 1/2. In terms of biological role, catalyzes the reversible reaction in which hydroxymethyl group from 5,10-methylenetetrahydrofolate is transferred onto alpha-ketoisovalerate to form ketopantoate. The sequence is that of 3-methyl-2-oxobutanoate hydroxymethyltransferase from Syntrophomonas wolfei subsp. wolfei (strain DSM 2245B / Goettingen).